The primary structure comprises 539 residues: uncharacterized protein (539 aa).

Serine 216 acts as the Acyl-ester intermediate in catalysis.

This sequence belongs to the type-B carboxylesterase/lipase family.

It is found in the cytoplasm. It localises to the nucleus. This is an uncharacterized protein from Schizosaccharomyces pombe (strain 972 / ATCC 24843) (Fission yeast).